The sequence spans 121 residues: RxLR effector protein PexRD2 (121 aa).

A signal peptide spans 1-20 (MRLSYVIVVIATSFLVTTEA). Positions 38 to 56 (RLLRKHYTAAENDDDSEAR) match the RxLR-dEER motif. A WY domain region spans residues 57-121 (ALNTEKMKTM…LNYVAEHTAV (65 aa)).

It belongs to the RxLR effector family. As to quaternary structure, homodimer. Interacts with host MAPKKK epsilon (via its kinase domain).

It localises to the secreted. The protein resides in the host cytoplasm. It is found in the host nucleus. In terms of biological role, effector that enhances P.infestans colonization of Nicotiana benthamiana leaves. Induces a weak Cell death response in N.benthamiana. PexRD2-induced cell death is dependent on SGT1, suggesting that PexRD2 is recognized by the plant immune system. Interacts with the kinase domain of the host MAPKKK epsilon, a positive regulator of cell death associated with plant immunity, and perturbs signaling pathways triggered by MAPKKK epsilon. In Phytophthora infestans (strain T30-4) (Potato late blight agent), this protein is RxLR effector protein PexRD2.